Consider the following 62-residue polypeptide: Conotoxin Pn-014 (62 aa).

A signal peptide spans 1–22 (MRCLPVFVILLLLIASAPSVDA). Positions 23-48 (RPKTKDDIPLVSFQDHAKRILQTFES) are excised as a propeptide. Trp-61 bears the Tryptophan amide mark.

Belongs to the conotoxin T superfamily. Contains 2 disulfide bonds that can be either 'C1-C3, C2-C4' or 'C1-C4, C2-C3', since these disulfide connectivities have been observed for conotoxins with cysteine framework V (for examples, see AC P0DQQ7 and AC P81755). Expressed by the venom duct.

The protein resides in the secreted. In Conus pennaceus (Feathered cone), this protein is Conotoxin Pn-014.